A 313-amino-acid polypeptide reads, in one-letter code: Glutathione synthetase (313 aa).

The region spanning 125 to 309 (KLFVMDFTEL…IAAKIWDVIE (185 aa)) is the ATP-grasp domain. An ATP-binding site is contributed by 151-207 (RAEHGAVVMKPLHGHGGAAVFRVLPQDINFGSLYDMFAVTFREPWVIQRFLPEVKHG). Mg(2+) contacts are provided by Glu-280 and Asn-282.

This sequence belongs to the prokaryotic GSH synthase family. The cofactor is Mg(2+). It depends on Mn(2+) as a cofactor.

The enzyme catalyses gamma-L-glutamyl-L-cysteine + glycine + ATP = glutathione + ADP + phosphate + H(+). Its pathway is sulfur metabolism; glutathione biosynthesis; glutathione from L-cysteine and L-glutamate: step 2/2. This chain is Glutathione synthetase, found in Rhodopseudomonas palustris (strain ATCC BAA-98 / CGA009).